The sequence spans 211 residues: Soluble inorganic pyrophosphatase PPA1 (211 aa).

The substrate site is built by Lys-61 and Arg-75. Catalysis depends on Tyr-83, which acts as the Proton donor. Substrate is bound at residue Tyr-87. Residues Asp-97, Asp-102, and Asp-134 each contribute to the Mg(2+) site. Tyr-171 is a binding site for substrate.

Belongs to the PPase family. Requires Mg(2+) as cofactor.

Its subcellular location is the cytoplasm. It carries out the reaction diphosphate + H2O = 2 phosphate + H(+). With respect to regulation, strongly inhibited by Ca(2+). Catalyzes the irreversible hydrolysis of pyrophosphate (PPi) to phosphate. This Solanum tuberosum (Potato) protein is Soluble inorganic pyrophosphatase PPA1.